We begin with the raw amino-acid sequence, 709 residues long: Mucin-20 (709 aa).

A signal peptide spans 1–25 (MGCLWGLALPLFFFCWEVGVSGSSA). The span at 57–69 (TQTLSAETSSRAS) shows a compositional bias: polar residues. Disordered stretches follow at residues 57–92 (TQTLSAETSSRASTPAGPIPEAETRGAKRISPARET) and 170–403 (KGLS…WSPG). The segment covering 78-92 (AETRGAKRISPARET) has biased composition (basic and acidic residues). 12 stretches are compositionally biased toward low complexity: residues 173 to 182 (SSESSASSDS), 190 to 199 (SRASESSASS), 209 to 218 (SRASESSASS), 228 to 237 (SRASESSASS), 247 to 256 (SRASESSASS), 266 to 275 (SRASESSASS), 285 to 294 (SRASESSASS), 304 to 313 (SRASESSASS), 323 to 332 (SRASESSASS), 342 to 351 (SRASESSASS), 361 to 370 (SRASESSASS), and 380 to 389 (SRASESSASS). Repeat copies occupy residues 173 to 192 (SSESSASSDSPHPVITPSRA), 193 to 211 (SESSASSDGPHPVITPSRA), 212 to 230 (SESSASSDGPHPVITPSRA), 231 to 249 (SESSASSDGPHPVITPSRA), 250 to 268 (SESSASSDGPHPVITPSRA), 269 to 287 (SESSASSDGPHPVITPSRA), 288 to 306 (SESSASSDGPHPVITPSRA), 307 to 325 (SESSASSDGPHPVITPSRA), 326 to 344 (SESSASSDGPHPVITPSRA), 345 to 363 (SESSASSDGLHPVITPSRA), and 364 to 382 (SESSASSDGPHPVITPSRA). The interval 173-400 (SSESSASSDS…GPHPVITPSW (228 aa)) is 12 X 20 AA approximate tandem repeats of S-S-E-S-S-A-S-S-D-S-P-H-P-V-I-T-P-S-R-A. The 12; approximate repeat unit spans residues 383 to 400 (SESSASSDGPHPVITPSW). Residue Asn423 is glycosylated (N-linked (GlcNAc...) asparagine). 2 disordered regions span residues 434-515 (SSIP…APGA) and 583-657 (NFTP…VSAG). An involved in oligomerization region spans residues 450–656 (VKASSTSDPP…RTRPTTDVSA (207 aa)). Residues 474–489 (VTASAETLSTAGTTES) are compositionally biased toward polar residues. Positions 613 to 652 (TTTNSSRGTNSTLAKITTSAKTTMKPPTATPTTARTRPTT) are enriched in low complexity. 2 N-linked (GlcNAc...) asparagine glycosylation sites follow: Asn616 and Asn622. The interaction with MET stretch occupies residues 657-709 (GENGGFLLLRLSVASPEDLTDPRVAERLMQQLHRELHAHAPHFQVSLLRVRRG).

As to quaternary structure, interacts with MET; oligomerization increases affinity for MET. In terms of tissue distribution, highly expressed in kidney, moderately in placenta, lung, prostate, liver, and digestive system. In the kidney, localized in the proximal tubules but not in the glomerulus or distal tubules. Detected in most of the male urogenital tract epithelia, with the exception of epididymis.

It is found in the secreted. Its subcellular location is the apical cell membrane. It localises to the basolateral cell membrane. The protein resides in the cell projection. The protein localises to the microvillus membrane. May regulate MET signaling cascade. Seems to decrease hepatocyte growth factor (HGF)-induced transient MAPK activation. Blocks GRB2 recruitment to MET thus suppressing the GRB2-RAS pathway. Inhibits HGF-induced proliferation of MMP1 and MMP9 expression. The chain is Mucin-20 (MUC20) from Homo sapiens (Human).